A 197-amino-acid chain; its full sequence is Large ribosomal subunit protein bL25 (197 aa).

The protein belongs to the bacterial ribosomal protein bL25 family. CTC subfamily. Part of the 50S ribosomal subunit; part of the 5S rRNA/L5/L18/L25 subcomplex. Contacts the 5S rRNA. Binds to the 5S rRNA independently of L5 and L18.

In terms of biological role, this is one of the proteins that binds to the 5S RNA in the ribosome where it forms part of the central protuberance. This Pseudomonas putida (strain ATCC 700007 / DSM 6899 / JCM 31910 / BCRC 17059 / LMG 24140 / F1) protein is Large ribosomal subunit protein bL25.